The sequence spans 474 residues: Glutamate--tRNA ligase 1 (474 aa).

The 'HIGH' region signature appears at 10–20 (PSPTGFLHIGG). Residues 239–243 (KLSKR) carry the 'KMSKS' region motif. Position 242 (lysine 242) interacts with ATP.

This sequence belongs to the class-I aminoacyl-tRNA synthetase family. Glutamate--tRNA ligase type 1 subfamily. In terms of assembly, monomer.

It is found in the cytoplasm. The enzyme catalyses tRNA(Glu) + L-glutamate + ATP = L-glutamyl-tRNA(Glu) + AMP + diphosphate. In terms of biological role, catalyzes the attachment of glutamate to tRNA(Glu) in a two-step reaction: glutamate is first activated by ATP to form Glu-AMP and then transferred to the acceptor end of tRNA(Glu). The sequence is that of Glutamate--tRNA ligase 1 from Methylobacterium sp. (strain 4-46).